The primary structure comprises 269 residues: Putative pyruvate, phosphate dikinase regulatory protein (269 aa).

153–160 (GVSRTSKT) is an ADP binding site.

The protein belongs to the pyruvate, phosphate/water dikinase regulatory protein family. PDRP subfamily.

It catalyses the reaction N(tele)-phospho-L-histidyl/L-threonyl-[pyruvate, phosphate dikinase] + ADP = N(tele)-phospho-L-histidyl/O-phospho-L-threonyl-[pyruvate, phosphate dikinase] + AMP + H(+). The enzyme catalyses N(tele)-phospho-L-histidyl/O-phospho-L-threonyl-[pyruvate, phosphate dikinase] + phosphate + H(+) = N(tele)-phospho-L-histidyl/L-threonyl-[pyruvate, phosphate dikinase] + diphosphate. Functionally, bifunctional serine/threonine kinase and phosphorylase involved in the regulation of the pyruvate, phosphate dikinase (PPDK) by catalyzing its phosphorylation/dephosphorylation. The chain is Putative pyruvate, phosphate dikinase regulatory protein from Pediococcus pentosaceus (strain ATCC 25745 / CCUG 21536 / LMG 10740 / 183-1w).